The following is a 218-amino-acid chain: MGSAALEILGLVLCLVGWVGLILACGLPMWQVTAFLDHNIVTAQTTWKGLWMSCVVQSTGHMQCKVYESVLALSAEVQAARALTVGAVLLALVALFVTLTGAQCTTCVAPGPVKARVALTGGALYAVCGLLALVPLCWFANIVVREFYDPTVPVSQKYELGAALYIGWAASALLMCGGGLVCCGAWVCTGRPEFSFPVKYSAPRRPTANGDYDKKNYV.

The Cytoplasmic segment spans residues 1–7 (MGSAALE). Residues 8 to 28 (ILGLVLCLVGWVGLILACGLP) form a helical membrane-spanning segment. Residues 29–81 (MWQVTAFLDHNIVTAQTTWKGLWMSCVVQSTGHMQCKVYESVLALSAEVQAAR) are Extracellular-facing. A helical transmembrane segment spans residues 82-102 (ALTVGAVLLALVALFVTLTGA). The Cytoplasmic segment spans residues 103-123 (QCTTCVAPGPVKARVALTGGA). Residues 124 to 144 (LYAVCGLLALVPLCWFANIVV) form a helical membrane-spanning segment. Over 145–160 (REFYDPTVPVSQKYEL) the chain is Extracellular. The chain crosses the membrane as a helical span at residues 161–181 (GAALYIGWAASALLMCGGGLV). Over 182–218 (CCGAWVCTGRPEFSFPVKYSAPRRPTANGDYDKKNYV) the chain is Cytoplasmic. The interval 217–218 (YV) is interactions with TJP1, TJP2 and TJP3.

Belongs to the claudin family. In terms of assembly, interacts with MPDZ. Directly interacts with TJP1/ZO-1, TJP2/ZO-2 and TJP3/ZO-3. In terms of tissue distribution, widely expressed with highest levels in the lung.

The protein resides in the cell junction. It localises to the tight junction. It is found in the cell membrane. Its function is as follows. Plays a major role in tight junction-specific obliteration of the intercellular space, through calcium-independent cell-adhesion activity. The protein is Claudin-5 (Cldn5) of Mus musculus (Mouse).